The following is a 131-amino-acid chain: D-ribose pyranase (131 aa).

The Proton donor role is filled by H20. Substrate-binding positions include D28, H98, and 120–122 (FSN).

The protein belongs to the RbsD / FucU family. RbsD subfamily. Homodecamer.

Its subcellular location is the cytoplasm. The catalysed reaction is beta-D-ribopyranose = beta-D-ribofuranose. It functions in the pathway carbohydrate metabolism; D-ribose degradation; D-ribose 5-phosphate from beta-D-ribopyranose: step 1/2. Functionally, catalyzes the interconversion of beta-pyran and beta-furan forms of D-ribose. This Petrotoga mobilis (strain DSM 10674 / SJ95) protein is D-ribose pyranase.